The sequence spans 240 residues: Citrate synthase-lysine N-methyltransferase CSKMT, mitochondrial (240 aa).

The N-terminal 28 residues, 1-28, are a transit peptide targeting the mitochondrion; the sequence is MAALRRMLHLPSLMMGTCRPFAGSLADS.

The protein belongs to the methyltransferase superfamily.

Its subcellular location is the mitochondrion. The catalysed reaction is L-lysyl-[citrate synthase] + S-adenosyl-L-methionine = N(6)-methyl-L-lysyl-[citrate synthase] + S-adenosyl-L-homocysteine + H(+). The enzyme catalyses N(6)-methyl-L-lysyl-[citrate synthase] + S-adenosyl-L-methionine = N(6),N(6)-dimethyl-L-lysyl-[citrate synthase] + S-adenosyl-L-homocysteine + H(+). It catalyses the reaction N(6),N(6)-dimethyl-L-lysyl-[citrate synthase] + S-adenosyl-L-methionine = N(6),N(6),N(6)-trimethyl-L-lysyl-[citrate synthase] + S-adenosyl-L-homocysteine + H(+). With respect to regulation, citrate synthase-lysine methyltransferase activity is inhibited by S-adenosylhomocysteine (AdoHcy) and oxaloacetate (OAA). Its function is as follows. Protein-lysine methyltransferase that selectively trimethylates citrate synthase (CS) in mitochondria. Seems to conduct trimethylation in a highly distributive manner rather than in a processive manner, and thus introduces a single methyl group per binding event. The sequence is that of Citrate synthase-lysine N-methyltransferase CSKMT, mitochondrial from Homo sapiens (Human).